Reading from the N-terminus, the 368-residue chain is Xaa-Pro dipeptidase (368 aa).

Residues Asp-223, Asp-234, His-298, Glu-327, and Glu-341 each contribute to the Mn(2+) site.

Belongs to the peptidase M24B family. Mn(2+) serves as cofactor.

Its subcellular location is the cytoplasm. The catalysed reaction is Xaa-L-Pro dipeptide + H2O = an L-alpha-amino acid + L-proline. The sequence is that of Xaa-Pro dipeptidase (pepQ) from Lactobacillus helveticus (Lactobacillus suntoryeus).